We begin with the raw amino-acid sequence, 433 residues long: MSFPKELERVLEITKAQNVWRRTQTLNLIASENVMSPLAESVYMSDFMSRYAEGKPYKRYYQGTKYTDEIETLAMDLMNEITNSKDCDLRPTSGTIANAAVFRVLAEPGDKALIAPVQAGAHVSHTKFGTLGALGIQHIEMPFDEENINVDVDKAIKMIEEVKPKFVVLGGSLYLFPHPTKELAPHVHAVGAKLVYDAAHVYGLIEGKVWSSPLKEGADIMTVSTHKTFPGPQGGAIFSDGSEVFKQVSRTIFPWFVSNHHLHRLPATAVTAIEMKYFGESYANQITRNSKALAEALAERGFKVIGENLGYTKSHQVAVDVRQFGGGNKIAKLLEDANIIVNKNLLPYDKPENVSDPSGLRIGVQEMTRYGMKESEMEEIAELFKKVIIDKKDINEVKKEVIDMRKNFLEVKYTFDDMKDLEKYSSKSLKLII.

121-123 (AHV) serves as a coordination point for (6S)-5,6,7,8-tetrahydrofolate. K227 carries the N6-(pyridoxal phosphate)lysine modification. E243 contacts (6S)-5,6,7,8-tetrahydrofolate.

The protein belongs to the SHMT family. In terms of assembly, homodimer. The cofactor is pyridoxal 5'-phosphate.

It localises to the cytoplasm. Its pathway is amino-acid biosynthesis; glycine biosynthesis; glycine from L-serine: step 1/1. Its function is as follows. Catalyzes the reversible interconversion of serine and glycine with a modified folate serving as the one-carbon carrier. Also exhibits a pteridine-independent aldolase activity toward beta-hydroxyamino acids, producing glycine and aldehydes, via a retro-aldol mechanism. This chain is Serine hydroxymethyltransferase, found in Saccharolobus islandicus (strain L.S.2.15 / Lassen #1) (Sulfolobus islandicus).